The following is a 520-amino-acid chain: Ribonuclease Y (520 aa).

Residues 1-21 (MDIITIIIAVIAGIGGGFGIS) form a helical membrane-spanning segment. In terms of domain architecture, KH spans 210–276 (CVSVFNIESD…RLALHKLVTD (67 aa)). The HD domain occupies 336 to 429 (LLQHSREVSK…VQVCDAISGA (94 aa)).

Belongs to the RNase Y family.

The protein localises to the cell membrane. In terms of biological role, endoribonuclease that initiates mRNA decay. The protein is Ribonuclease Y of Flavobacterium psychrophilum (strain ATCC 49511 / DSM 21280 / CIP 103535 / JIP02/86).